Here is a 327-residue protein sequence, read N- to C-terminus: MAMTAEVKDELSRLTVSQVSSRKAELSALLRFAGGLHIVGGRVIVEAEVDMGSIARRLRREIFELYGYGSDVHVLGAGGLRKTSRYVVRVSKEGEALARQTGLLDVRGRPVRGLPAQVVGGSIADAEAAWRGAFLAHGSLTEPGRSSALEVSCPGPEAALALVGAARRLGITAKAREVRGTDRVVVRDGEAIGALLTRMGAQDTRLTWEERRMRREVRATANRLANFDDANLRRSARAAVAAAARVERALEILGEDVPDHLAAAGKLRVQHRQASLEELGQLADPPMTKDAVAGRIRRLLSMADRRARELGIPDTESAVTAELLDEA.

Positions Ser-275–Arg-308 form a DNA-binding region, H-T-H motif.

It belongs to the WhiA family.

In terms of biological role, involved in cell division and chromosome segregation. The sequence is that of Probable cell division protein WhiA from Nocardia farcinica (strain IFM 10152).